Consider the following 85-residue polypeptide: Small ribosomal subunit protein bS18 (85 aa).

Belongs to the bacterial ribosomal protein bS18 family. As to quaternary structure, part of the 30S ribosomal subunit. Forms a tight heterodimer with protein bS6.

Functionally, binds as a heterodimer with protein bS6 to the central domain of the 16S rRNA, where it helps stabilize the platform of the 30S subunit. The sequence is that of Small ribosomal subunit protein bS18 from Helicobacter pylori (strain Shi470).